The chain runs to 650 residues: Phosphatidylinositol-3,5-bisphosphate 3-phosphatase MTMR14 (650 aa).

A disordered region spans residues Met-1–Leu-27. An N6-acetyllysine modification is found at Lys-194. N-linked (GlcNAc...) asparagine glycosylation is present at Asn-226. Cys-330 (phosphocysteine intermediate) is an active-site residue. Gly-333, Trp-334, Asp-335, Arg-336, and Arg-382 together coordinate a 1,2-diacyl-sn-glycero-3-phospho-(1D-myo-inositol-3,5-bisphosphate). A 1,2-diacyl-sn-glycero-3-phospho-(1D-myo-inositol-3-phosphate)-binding residues include Gly-333, Trp-334, Asp-335, Arg-336, and Arg-382. A disordered region spans residues Ala-476 to Gly-546. Ser-518 is modified (phosphoserine). N-linked (GlcNAc...) asparagine glycosylation occurs at Asn-519. Phosphoserine is present on residues Ser-530, Ser-580, and Ser-624. An Omega-N-methylarginine modification is found at Arg-638.

Belongs to the protein-tyrosine phosphatase family. Non-receptor class myotubularin subfamily. In terms of tissue distribution, expressed in various tissues, including heart, skeletal muscle, placenta, liver, lung, kidney and pancreas.

The protein localises to the cytoplasm. The catalysed reaction is a 1,2-diacyl-sn-glycero-3-phospho-(1D-myo-inositol-3,5-bisphosphate) + H2O = a 1,2-diacyl-sn-glycero-3-phospho-(1D-myo-inositol-5-phosphate) + phosphate. It catalyses the reaction a 1,2-diacyl-sn-glycero-3-phospho-(1D-myo-inositol-3-phosphate) + H2O = a 1,2-diacyl-sn-glycero-3-phospho-(1D-myo-inositol) + phosphate. Lipid phosphatase that specifically dephosphorylates the D-3 position of phosphatidylinositol 3-phosphate and phosphatidylinositol 3,5-bisphosphate, generating phosphatidylinositol and phosphatidylinositol 5-phosphate. This Homo sapiens (Human) protein is Phosphatidylinositol-3,5-bisphosphate 3-phosphatase MTMR14.